Consider the following 65-residue polypeptide: Small hydrophobic protein (65 aa).

Residues 1 to 20 (MGNTSITIEFTSKFWPYFTL) are Intravirion-facing. The interval 6–15 (ITIEFTSKFW) is interaction with host BCAP31. Residues 21–44 (IHMILTLISLLIIITIMIAILNKL) form a helical; Signal-anchor for type II membrane protein membrane-spanning segment. The segment at 38 to 43 (IAILNK) is interaction with small-molecule inhibitor. Topologically, residues 45–65 (SEHKTFCNNTLELGQMHQINT) are virion surface. An N-linked (GlcNAc...) asparagine; by host glycan is attached at Asn52.

The protein belongs to the orthopneumovirus small hydrophobic protein family. As to quaternary structure, homopentamer forming a funnel-like pore. Interacts with glycoprotein G; this interaction occurs on the surface of virion particles and infected cells. Interacts with host BCAP31 (via C-terminus); this interaction is direct. Four species of SH have been detected in infected cell cytoplasm: a 7.5 kDa non-glycosylated form (SH0), a 13-15 kDa form that contains one or two N-linked carbohydrate side chains of the high-mannose type (SHg), a 21-30 kDa polylactosaminoglycan-modified form of the protein (SHp), and the isoform generated by alternative translational initiation. Of these different forms, SH0 is by far the most abundant protein detected during virus infection. In terms of processing, tyrosine phosphorylated.

Its subcellular location is the virion membrane. The protein localises to the host cell membrane. It localises to the host Golgi apparatus membrane. It is found in the host endoplasmic reticulum membrane. With respect to regulation, channel activity is inhibited by copper. Also inhibited by small-molecule pyronin B. Viroporin that forms a homopentameric ion channel displaying low ion selectivity. May play a role in virus morphogenesis and pathogenicity at various stages of the viral life cycle. Accumulates at the membrane of the Golgi apparatus in infected cells and may facilitate virus release by modifying the secretory pathway. May enhance host membrane permeability and disrupt cellular ion homeostasis, which can be sensed as damage-associated molecular patterns/danger signals, triggering NLRP3 inflammasome activation and inflammatory immune response. Also inhibits host TNFA-mediated signaling pathway and may delay apoptosis, allowing time for the virus to replicate. The protein is Small hydrophobic protein of Homo sapiens (Human).